Here is a 398-residue protein sequence, read N- to C-terminus: Putative F-box protein At1g67450 (398 aa).

Positions 2 to 56 constitute an F-box domain; it reads TMMMSDLPNDLVEEILSRVPITSLGAVRSTCKRWNGLSKDRIVCKGDANQQFTGF.

In Arabidopsis thaliana (Mouse-ear cress), this protein is Putative F-box protein At1g67450.